We begin with the raw amino-acid sequence, 564 residues long: Membrane protein insertase YidC (564 aa).

The chain crosses the membrane as a helical span at residues 7 to 24 (VLWVVFSFSLLMLWDNYN). A compositionally biased stretch (low complexity) spans 43-60 (KPAAATDDGKTAAAPTAD). Residues 43–76 (KPAAATDDGKTAAAPTADVPTSSAHAANATGVPD) form a disordered region. 6 helical membrane-spanning segments follow: residues 293-313 (LATNLYAVGAIMPMGAVAPGA), 341-361 (VKDYGWLTIIAKPIFWLMIQI), 364-384 (LLGNWGWTIVVLTIVIKLAFF), 438-458 (MPIVIQIPVFISLYWVLLASV), 483-503 (IGSFHLTIGILPILMAISMFI), and 524-544 (PIAFSLMFFFFPAGLVLYWVV).

Belongs to the OXA1/ALB3/YidC family. Type 1 subfamily. Interacts with the Sec translocase complex via SecD. Specifically interacts with transmembrane segments of nascent integral membrane proteins during membrane integration.

Its subcellular location is the cell inner membrane. Required for the insertion and/or proper folding and/or complex formation of integral membrane proteins into the membrane. Involved in integration of membrane proteins that insert both dependently and independently of the Sec translocase complex, as well as at least some lipoproteins. Aids folding of multispanning membrane proteins. This is Membrane protein insertase YidC from Janthinobacterium sp. (strain Marseille) (Minibacterium massiliensis).